The chain runs to 175 residues: Large ribosomal subunit protein uL10 (175 aa).

This sequence belongs to the universal ribosomal protein uL10 family. As to quaternary structure, part of the ribosomal stalk of the 50S ribosomal subunit. The N-terminus interacts with L11 and the large rRNA to form the base of the stalk. The C-terminus forms an elongated spine to which L12 dimers bind in a sequential fashion forming a multimeric L10(L12)X complex.

Forms part of the ribosomal stalk, playing a central role in the interaction of the ribosome with GTP-bound translation factors. This chain is Large ribosomal subunit protein uL10, found in Synechococcus sp. (strain CC9902).